The primary structure comprises 871 residues: Transient receptor potential cation channel subfamily V member 4 (871 aa).

Positions 1 to 68 (MADSSEGPRA…GPGDGRPNLR (68 aa)) are disordered. Residues 1-469 (MADSSEGPRA…RDKWRKFGAV (469 aa)) lie on the Cytoplasmic side of the membrane. At tyrosine 110 the chain carries Phosphotyrosine. ATP-binding positions include lysine 192, lysine 197, asparagine 201, 236–239 (YRGQ), and arginine 248. ANK repeat units lie at residues 237 to 266 (RGQTALHIAIERRCKHYVELLVAQGADVHA) and 284 to 313 (FGELPLSLAACTNQPHIVNYLTENPHKKAD). Residue 249–251 (RCK) coordinates a 1,2-diacyl-sn-glycero-3-phospho-(1D-myo-inositol-4,5-bisphosphate). Tyrosine 253 is subject to Phosphotyrosine. Residues 296 to 299 (NQPH) and lysine 344 contribute to the a 1,2-diacyl-sn-glycero-3-phospho-(1D-myo-inositol-4,5-bisphosphate) site. Residues 369–398 (DGLSPLMMAAKTGKIGIFQHIIRREVTDED) form an ANK 3 repeat. A helical membrane pass occupies residues 470–490 (SFYINVVSYLCAMVIFTLTAY). The Extracellular portion of the chain corresponds to 491 to 507 (YQPLEGTPPYPYRTTVD). A helical transmembrane segment spans residues 508–534 (YLRLAGEVITLFTGVLFFFTNIKDLFM). Over 535–547 (KKCPGVNSLFIDG) the chain is Cytoplasmic. Residues 548-568 (SFQLLYFIYSVLVIVSAALYL) traverse the membrane as a helical segment. The Extracellular segment spans residues 569 to 572 (AGIE). Residues 573–593 (AYLAVMVFALVLGWMNALYFT) traverse the membrane as a helical segment. The Cytoplasmic segment spans residues 594–608 (RGLKLTGTYSIMIQK). A helical membrane pass occupies residues 609–636 (ILFKDLFRFLLVYLLFMIGYASALVSLL). Over 637–665 (NPCANMKVCNEDQTNCTVPTYPSCRDSET) the chain is Extracellular. Residues 666–685 (FSTFLLDLFKLTIGMGDLEM) constitute an intramembrane region (pore-forming). A Selectivity filter motif is present at residues 679–682 (GMGD). Aspartate 682 contributes to the Ca(2+) binding site. Over 686–693 (LSSTKYPV) the chain is Extracellular. A helical transmembrane segment spans residues 694–722 (VFIILLVTYIILTFVLLLNMLIALMGETV). The Cytoplasmic portion of the chain corresponds to 723–871 (GQVSKESKHI…RKWRTDDAPL (149 aa)). Tyrosine 805 carries the post-translational modification Phosphotyrosine. The segment at 812–831 (HTVGRLRRDRWSSVVPRVVE) is interaction with calmodulin and ITPR3. At serine 824 the chain carries Phosphoserine. Residues 849 to 871 (GNPRCDGHQQGYPRKWRTDDAPL) are disordered.

It belongs to the transient receptor (TC 1.A.4) family. TrpV subfamily. TRPV4 sub-subfamily. Homotetramer. Self-associates in an isoform-specific manner. Isoform 1 and isoform 5 can oligomerize, but isoform 2, isoform 4 and isoform 6 cannot oligomerize. Interacts with calmodulin. Interacts with Map7 and Src family Tyr protein kinases LYN, SRC, FYN, HCK, LCK and YES. Interacts with CTNNB1. The TRPV4 and CTNNB1 complex can interact with CDH1. Interacts with PACSIN1, PACSIN2 and PACSIN3 (via SH3 domain). Part of a complex containing MLC1, AQP4, HEPACAM and ATP1B1. Interacts with ITPR3. Interacts with AQP5; the interaction is probably indirect and regulates TRPV4 activation by hypotonicity. Interacts with ANO1. Interacts (via C-terminus) with PKD2 (via C-terminus). Interacts with DDX3X; this interaction is decreased when the channel is activated. N-glycosylated. In terms of tissue distribution, found in the synoviocytes from patients with (RA) and without (CTR) rheumatoid arthritis (at protein level).

The protein localises to the cell membrane. It is found in the apical cell membrane. It localises to the cell junction. The protein resides in the adherens junction. Its subcellular location is the cell projection. The protein localises to the cilium. It is found in the endoplasmic reticulum. It catalyses the reaction Ca(2+)(in) = Ca(2+)(out). With respect to regulation, channel activation is inhibited by binding to phosphatidylinositol-4,5-bisphosphate, and to a much lesser degree by phosphatidylinositol-3,4,5-trisphosphate. Not inhibited by phosphatidylinositol-3,4-bisphosphate and phosphatidylinositol-3,5-bisphosphate. In terms of biological role, non-selective calcium permeant cation channel involved in osmotic sensitivity and mechanosensitivity. Activation by exposure to hypotonicity within the physiological range exhibits an outward rectification. Also activated by heat, low pH, citrate and phorbol esters. Increase of intracellular Ca(2+) potentiates currents. Channel activity seems to be regulated by a calmodulin-dependent mechanism with a negative feedback mechanism. Promotes cell-cell junction formation in skin keratinocytes and plays an important role in the formation and/or maintenance of functional intercellular barriers. Acts as a regulator of intracellular Ca(2+) in synoviocytes. Plays an obligatory role as a molecular component in the nonselective cation channel activation induced by 4-alpha-phorbol 12,13-didecanoate and hypotonic stimulation in synoviocytes and also regulates production of IL-8. Together with PKD2, forms mechano- and thermosensitive channels in cilium. Negatively regulates expression of PPARGC1A, UCP1, oxidative metabolism and respiration in adipocytes. Regulates expression of chemokines and cytokines related to pro-inflammatory pathway in adipocytes. Together with AQP5, controls regulatory volume decrease in salivary epithelial cells. Required for normal development and maintenance of bone and cartilage. In its inactive state, may sequester DDX3X at the plasma membrane. When activated, the interaction between both proteins is affected and DDX3X relocalizes to the nucleus. In neurons of the central nervous system, could play a role in triggering voluntary water intake in response to increased sodium concentration in body fluid. Non-selective calcium permeant cation channel involved in osmotic sensitivity and mechanosensitivity. Activation by exposure to hypotonicity within the physiological range exhibits an outward rectification. Also activated by phorbol esters. Has the same channel activity as isoform 1, and is activated by the same stimuli. Its function is as follows. Lacks channel activity, due to impaired oligomerization and intracellular retention. Functionally, (Microbial infection) Facilitates hepatitis C virus (HCV) replication, possibly through its action on DDX3X. In terms of biological role, (Microbial infection) Facilitates Dengue virus (DENV) replication, possibly through its action on DDX3X. (Microbial infection) Facilitates Zika virus (ZIKV) replication, possibly through its action on DDX3X. This is Transient receptor potential cation channel subfamily V member 4 (TRPV4) from Homo sapiens (Human).